The following is a 522-amino-acid chain: Exo-alpha-(1-&gt;6)-L-arabinofuranosidase (522 aa).

Alpha-L-arabinofuranose is bound by residues Glu39, Asn84, and Asn185. Glu186 serves as the catalytic Proton donor/acceptor. Alpha-L-arabinofuranose contacts are provided by Tyr257, Glu310, and Gln370. The active-site Nucleophile is Glu310.

Belongs to the glycosyl hydrolase 51 family. Homohexamer; trimer of dimers.

The catalysed reaction is Hydrolysis of terminal non-reducing alpha-L-arabinofuranoside residues in alpha-L-arabinosides.. The enzyme catalyses (20S)-ginsenoside Rc + H2O = L-arabinofuranose + (20S)-ginsenoside Rd. With respect to regulation, completely inhibited by Cu(2+) and partially inhibited by Co(2+) and Ba(2+). In terms of biological role, catalyzes the hydrolysis of p-nitrophenyl-alpha-L-arabinofuranoside (pNP-alphaL-Af) and the hydrolysis of the terminal alpha-L-arabinofuranoside at the C20 position of ginsenoside Rc to produce ginsenoside Rd. Cannot hydrolyze p-nitrophenyl-alpha-L-arabinopyranoside (pNP-alphaL-Ap) and ginsenoside Rb2. The chain is Exo-alpha-(1-&gt;6)-L-arabinofuranosidase from Bifidobacterium longum.